Consider the following 474-residue polypeptide: MKVSISHKNNFKGVSYQAQALLMSKSVFAKSPYAKLCKSFGFEGEGKFFLQEQALLLVCVEELGLDSIREAGASIARHFRTLPYKNVNVALNGKLDDSKAYALLLGALLGVYECVSYKTKTPPLHLKEIILLDEKNEVASESVLKKVHIVAQSVNEVREIINTIPQVATPKYLAKYAKELSKEVGNLECKILDEEALQKEKMGAFLAVNRASCNPPRLIHLSYKPKGAKKRIVLVGKGLTYDCGGLSLKPADFMVTMKADKSGGCAVMGIIKAIAQLGANIEVHSIIGAAENMIGGNAYKPDDVLYSREGKSIEVRNTDAEGRLVLVDCLSYAQDLKPDILIDFATLTGACVVALGEFTSGIMGHNDRLKAQFEKCALESGELMATLPFNRHLKKLIESKIADVCNVGSSRYGGAISAGLFLSEFIREEFKQKWLHIDIAGPAYVEKEWDINPSGASGAGVRAGIEFILAQGKA.

2 residues coordinate Mn(2+): Lys237 and Asp242. Residue Lys249 is part of the active site. Residues Asp260, Asp319, and Glu321 each contribute to the Mn(2+) site. The active site involves Arg323.

Belongs to the peptidase M17 family. Mn(2+) is required as a cofactor.

It localises to the cytoplasm. It carries out the reaction Release of an N-terminal amino acid, Xaa-|-Yaa-, in which Xaa is preferably Leu, but may be other amino acids including Pro although not Arg or Lys, and Yaa may be Pro. Amino acid amides and methyl esters are also readily hydrolyzed, but rates on arylamides are exceedingly low.. The catalysed reaction is Release of an N-terminal amino acid, preferentially leucine, but not glutamic or aspartic acids.. Functionally, presumably involved in the processing and regular turnover of intracellular proteins. Catalyzes the removal of unsubstituted N-terminal amino acids from various peptides. This Helicobacter hepaticus (strain ATCC 51449 / 3B1) protein is Probable cytosol aminopeptidase.